The chain runs to 323 residues: PI-PLC X domain-containing protein 1 (323 aa).

Residues 30 to 206 (RLWDVPLHHL…QVIVSYEDES (177 aa)) form the PI-PLC X-box domain.

As to expression, widely expressed.

The protein localises to the cytoplasm. This Homo sapiens (Human) protein is PI-PLC X domain-containing protein 1 (PLCXD1).